Reading from the N-terminus, the 423-residue chain is Aspartate aminotransferase, mitochondrial (423 aa).

Residues 1–22 (MALLQSRLLLSAPRRAAATARA) constitute a mitochondrion transit peptide. Residues G58, W155, and N208 each contribute to the substrate site. K272 bears the N6-(pyridoxal phosphate)lysine mark. R400 provides a ligand contact to substrate.

It belongs to the class-I pyridoxal-phosphate-dependent aminotransferase family. As to quaternary structure, homodimer. It depends on pyridoxal 5'-phosphate as a cofactor. As to expression, detected in heart (at protein level).

Its subcellular location is the mitochondrion matrix. It carries out the reaction L-aspartate + 2-oxoglutarate = oxaloacetate + L-glutamate. The catalysed reaction is L-kynurenine + 2-oxoglutarate = kynurenate + L-glutamate + H2O. In terms of biological role, catalyzes the irreversible transamination of the L-tryptophan metabolite L-kynurenine to form kynurenic acid (KA). As a member of the malate-aspartate shuttle, it has a key role in the intracellular NAD(H) redox balance. Is important for metabolite exchange between mitochondria and cytosol, and for amino acid metabolism. In Gallus gallus (Chicken), this protein is Aspartate aminotransferase, mitochondrial (GOT2).